We begin with the raw amino-acid sequence, 303 residues long: Protoheme IX farnesyltransferase (303 aa).

6 helical membrane passes run 25-45 (MGLV…AIVM), 54-74 (IPQI…ACAL), 118-138 (CLFL…VGYV), 166-186 (IGWV…FLVV), 230-250 (LVLL…FVVI), and 280-300 (FVYS…VSLI).

It belongs to the UbiA prenyltransferase family. Protoheme IX farnesyltransferase subfamily. As to quaternary structure, interacts with CtaA.

The protein resides in the cell membrane. It catalyses the reaction heme b + (2E,6E)-farnesyl diphosphate + H2O = Fe(II)-heme o + diphosphate. It functions in the pathway porphyrin-containing compound metabolism; heme O biosynthesis; heme O from protoheme: step 1/1. Its function is as follows. Converts heme B (protoheme IX) to heme O by substitution of the vinyl group on carbon 2 of heme B porphyrin ring with a hydroxyethyl farnesyl side group. This Staphylococcus epidermidis (strain ATCC 12228 / FDA PCI 1200) protein is Protoheme IX farnesyltransferase.